A 334-amino-acid chain; its full sequence is Dihydroorotate dehydrogenase (quinone) (334 aa).

Residues 59–63 (AGLDK) and Thr83 contribute to the FMN site. A substrate-binding site is contributed by Lys63. 108–112 (NRMGF) is a binding site for substrate. FMN-binding residues include Asn136 and Asn169. Asn169 lines the substrate pocket. The Nucleophile role is filled by Ser172. Asn174 serves as a coordination point for substrate. FMN is bound by residues Lys214 and Thr242. Position 243–244 (243–244 (NT)) interacts with substrate. FMN-binding positions include Gly265, Gly294, and 315–316 (YS).

This sequence belongs to the dihydroorotate dehydrogenase family. Type 2 subfamily. Monomer. Requires FMN as cofactor.

The protein localises to the cell membrane. The enzyme catalyses (S)-dihydroorotate + a quinone = orotate + a quinol. The protein operates within pyrimidine metabolism; UMP biosynthesis via de novo pathway; orotate from (S)-dihydroorotate (quinone route): step 1/1. Its function is as follows. Catalyzes the conversion of dihydroorotate to orotate with quinone as electron acceptor. This is Dihydroorotate dehydrogenase (quinone) from Acinetobacter baumannii (strain SDF).